A 303-amino-acid polypeptide reads, in one-letter code: UDP-3-O-acyl-N-acetylglucosamine deacetylase (303 aa).

Positions 78, 237, and 241 each coordinate Zn(2+). The Proton donor role is filled by H264.

It belongs to the LpxC family. Zn(2+) serves as cofactor.

The enzyme catalyses a UDP-3-O-[(3R)-3-hydroxyacyl]-N-acetyl-alpha-D-glucosamine + H2O = a UDP-3-O-[(3R)-3-hydroxyacyl]-alpha-D-glucosamine + acetate. Its pathway is glycolipid biosynthesis; lipid IV(A) biosynthesis; lipid IV(A) from (3R)-3-hydroxytetradecanoyl-[acyl-carrier-protein] and UDP-N-acetyl-alpha-D-glucosamine: step 2/6. Its function is as follows. Catalyzes the hydrolysis of UDP-3-O-myristoyl-N-acetylglucosamine to form UDP-3-O-myristoylglucosamine and acetate, the committed step in lipid A biosynthesis. The chain is UDP-3-O-acyl-N-acetylglucosamine deacetylase from Stenotrophomonas maltophilia (strain K279a).